A 285-amino-acid chain; its full sequence is Acetylglutamate kinase (285 aa).

Substrate is bound by residues 55–56 (GG), Arg77, and Asn171.

This sequence belongs to the acetylglutamate kinase family. ArgB subfamily.

It localises to the cytoplasm. It carries out the reaction N-acetyl-L-glutamate + ATP = N-acetyl-L-glutamyl 5-phosphate + ADP. Its pathway is amino-acid biosynthesis; L-arginine biosynthesis; N(2)-acetyl-L-ornithine from L-glutamate: step 2/4. Functionally, catalyzes the ATP-dependent phosphorylation of N-acetyl-L-glutamate. The polypeptide is Acetylglutamate kinase (Chlorobaculum tepidum (strain ATCC 49652 / DSM 12025 / NBRC 103806 / TLS) (Chlorobium tepidum)).